Reading from the N-terminus, the 99-residue chain is High mobility group nucleosome-binding domain-containing protein 3 (99 aa).

Basic and acidic residues-rich tracts occupy residues 1 to 25 (MPKRKSPENTEGKDGTKLTKQEPTR) and 39 to 53 (PESKPRKTSAKKEPG). The segment at 1–99 (MPKRKSPENT…RTESIEKEGE (99 aa)) is disordered. The residue at position 6 (S6) is a Phosphoserine. Position 10 is a phosphothreonine (T10). Residues S78 and S93 each carry the phosphoserine modification. Positions 83–99 (TKVEEAQRTESIEKEGE) are enriched in basic and acidic residues.

It belongs to the HMGN family. In terms of assembly, interacts with the ligand binding domain of the thyroid receptor (TR) (in vitro). Requires the presence of thyroid hormone for its interaction. Interacts with transcriptional regulator SEHBP. Interacts with nucleosomes. As to expression, expressed in the brain, eye, prostate, thyroid, kidney, testis, glial cells and insulin-producing cells of the Langerhans pancreatic islets. In the brain, expressed in the lateral olfactory tract, anterior commissure, corpus callosum, internal capsule, fornix, stria medullans, optic tract, axon bundles, Purkinje cell layer and granular layer of the cerebellum. In retina, expressed in the nuclei of cells in the inner nuclear layer including amacrine, bipolar and horizontal neurons and in the nuclei of ganglion neurons. Detected at low levels in the liver.

It localises to the nucleus. Functionally, binds to nucleosomes, regulating chromatin structure and consequently, chromatin-dependent processes such as transcription, DNA replication and DNA repair. Affects both insulin and glucagon levels and modulates the expression of pancreatic genes involved in insulin secretion. Regulates the expression of the glucose transporter SLC2A2 by binding specifically to its promoter region and recruiting PDX1 and additional transcription factors. Regulates the expression of SLC6A9, a glycine transporter which regulates the glycine concentration in synaptic junctions in the central nervous system, by binding to its transcription start site. May play a role in ocular development and astrocyte function. The protein is High mobility group nucleosome-binding domain-containing protein 3 (Hmgn3) of Mus musculus (Mouse).